The primary structure comprises 236 residues: Venom metalloproteinase antarease-like TfasMP_A (236 aa).

One can recognise a Peptidase M12B domain in the interval 4–232 (IVVEYYIVTD…KPAASCIFEQ (229 aa)). Histidine 161 serves as a coordination point for Zn(2+). Glutamate 162 is a catalytic residue. Positions 165 and 171 each coordinate Zn(2+).

Belongs to the venom metalloproteinase (M12B) family. Zn(2+) serves as cofactor. In terms of processing, contains several disulfide bonds. In terms of tissue distribution, expressed by the venom gland.

It localises to the secreted. With respect to regulation, inhibited by EDTA. Its function is as follows. Acts as a metalloprotease. Penetrates intact tissue and specifically cleaves the vesicle-associated membrane protein 2 (VAMP2) (part of the SNARE complex) involved in pancreatic secretion, thus disrupting the normal vesicular traffic. The sequence is that of Venom metalloproteinase antarease-like TfasMP_A from Tityus fasciolatus (Central Brazilian scorpion).